Consider the following 512-residue polypeptide: Nephrocan (512 aa).

The signal sequence occupies residues 1 to 19 (MHPLWAFLLGLSLTNGLSA). The 25-residue stretch at 20–44 (NCPGRCSCDSMQSVQCYRLMELPSG) folds into the LRRNT domain. LRR repeat units lie at residues 45–69 (IPST…NFTG), 71–93 (LALE…TFKT), 94–117 (LSTL…LPAN), 119–138 (EVLK…EFEG), 139–162 (LKNL…MLSP), 164–185 (ASLQ…PLSL), 186–208 (PHLK…VFTS), 210–232 (QNLQ…LPKS), 234–253 (LSLK…DMKH), 254–276 (LENL…AQQL), 277–299 (TNLT…LPSR), 301–320 (QKLD…EFQD), 321–344 (LRDL…ALQR), 346–371 (SQLS…TLAR), 373–389 (DLKG…ELRD), 390–413 (LKQL…ALEG), and 415–442 (PRLR…VLKA). An N-linked (GlcNAc...) asparagine glycan is attached at asparagine 66. The segment covering 474–484 (EHHLQQSEKSK) has biased composition (basic and acidic residues). Residues 474-512 (EHHLQQSEKSKETKKKPKPEDSSSIRLNMDDDDDDYEID) are disordered. The segment covering 503-512 (DDDDDDYEID) has biased composition (acidic residues).

It belongs to the small leucine-rich proteoglycan (SLRP) family. In terms of processing, N-glycosylated. Expressed at highest levels in the kidney, where it is primarily detected in the epithelial cells of distal tubules and collecting ducts, and more weakly in proximal epithelial cells. Expressed at lower levels in heart and lung (at protein level). Detected in skeletal muscle.

The protein resides in the secreted. May inhibit TGF-beta signaling. The polypeptide is Nephrocan (Mus musculus (Mouse)).